The chain runs to 368 residues: Phosphate acyltransferase (368 aa).

It belongs to the PlsX family. Homodimer. Probably interacts with PlsY.

It localises to the cytoplasm. The enzyme catalyses a fatty acyl-[ACP] + phosphate = an acyl phosphate + holo-[ACP]. It functions in the pathway lipid metabolism; phospholipid metabolism. Its function is as follows. Catalyzes the reversible formation of acyl-phosphate (acyl-PO(4)) from acyl-[acyl-carrier-protein] (acyl-ACP). This enzyme utilizes acyl-ACP as fatty acyl donor, but not acyl-CoA. The chain is Phosphate acyltransferase from Granulibacter bethesdensis (strain ATCC BAA-1260 / CGDNIH1).